Reading from the N-terminus, the 311-residue chain is Bifunctional protein FolD (311 aa).

NADP(+) contacts are provided by residues 180–182 (GRS), serine 209, and isoleucine 250.

Belongs to the tetrahydrofolate dehydrogenase/cyclohydrolase family. Homodimer.

It carries out the reaction (6R)-5,10-methylene-5,6,7,8-tetrahydrofolate + NADP(+) = (6R)-5,10-methenyltetrahydrofolate + NADPH. The enzyme catalyses (6R)-5,10-methenyltetrahydrofolate + H2O = (6R)-10-formyltetrahydrofolate + H(+). The protein operates within one-carbon metabolism; tetrahydrofolate interconversion. Catalyzes the oxidation of 5,10-methylenetetrahydrofolate to 5,10-methenyltetrahydrofolate and then the hydrolysis of 5,10-methenyltetrahydrofolate to 10-formyltetrahydrofolate. The sequence is that of Bifunctional protein FolD from Haloquadratum walsbyi (strain DSM 16790 / HBSQ001).